The chain runs to 341 residues: Ketol-acid reductoisomerase (NADP(+)) (341 aa).

In terms of domain architecture, KARI N-terminal Rossmann spans 2–181; that stretch reads AKVYYNGDAN…GAARAGVLET (180 aa). NADP(+) contacts are provided by residues 25–28, Arg-48, Ser-52, and 82–85; these read YGSQ and DEKQ. His-107 is an active-site residue. Residue Gly-133 coordinates NADP(+). One can recognise a KARI C-terminal knotted domain in the interval 182–327; it reads TFKEETETDL…RELRSMMPFV (146 aa). Residues Asp-190, Glu-194, Glu-226, and Glu-230 each contribute to the Mg(2+) site. A substrate-binding site is contributed by Ser-251.

It belongs to the ketol-acid reductoisomerase family. It depends on Mg(2+) as a cofactor.

It carries out the reaction (2R)-2,3-dihydroxy-3-methylbutanoate + NADP(+) = (2S)-2-acetolactate + NADPH + H(+). The catalysed reaction is (2R,3R)-2,3-dihydroxy-3-methylpentanoate + NADP(+) = (S)-2-ethyl-2-hydroxy-3-oxobutanoate + NADPH + H(+). The protein operates within amino-acid biosynthesis; L-isoleucine biosynthesis; L-isoleucine from 2-oxobutanoate: step 2/4. It functions in the pathway amino-acid biosynthesis; L-valine biosynthesis; L-valine from pyruvate: step 2/4. Functionally, involved in the biosynthesis of branched-chain amino acids (BCAA). Catalyzes an alkyl-migration followed by a ketol-acid reduction of (S)-2-acetolactate (S2AL) to yield (R)-2,3-dihydroxy-isovalerate. In the isomerase reaction, S2AL is rearranged via a Mg-dependent methyl migration to produce 3-hydroxy-3-methyl-2-ketobutyrate (HMKB). In the reductase reaction, this 2-ketoacid undergoes a metal-dependent reduction by NADPH to yield (R)-2,3-dihydroxy-isovalerate. The protein is Ketol-acid reductoisomerase (NADP(+)) of Geobacillus kaustophilus (strain HTA426).